Here is a 198-residue protein sequence, read N- to C-terminus: Holliday junction resolvase RecU (198 aa).

Mg(2+) contacts are provided by threonine 83, aspartate 85, glutamate 98, and glutamine 117.

The protein belongs to the RecU family. Mg(2+) serves as cofactor.

Its subcellular location is the cytoplasm. The enzyme catalyses Endonucleolytic cleavage at a junction such as a reciprocal single-stranded crossover between two homologous DNA duplexes (Holliday junction).. Endonuclease that resolves Holliday junction intermediates in genetic recombination. Cleaves mobile four-strand junctions by introducing symmetrical nicks in paired strands. Promotes annealing of linear ssDNA with homologous dsDNA. Required for DNA repair, homologous recombination and chromosome segregation. This is Holliday junction resolvase RecU from Streptococcus thermophilus (strain CNRZ 1066).